The primary structure comprises 127 residues: Phosphoribosyl-ATP pyrophosphatase (127 aa).

The protein belongs to the PRA-PH family.

The protein localises to the cytoplasm. It carries out the reaction 1-(5-phospho-beta-D-ribosyl)-ATP + H2O = 1-(5-phospho-beta-D-ribosyl)-5'-AMP + diphosphate + H(+). The protein operates within amino-acid biosynthesis; L-histidine biosynthesis; L-histidine from 5-phospho-alpha-D-ribose 1-diphosphate: step 2/9. The polypeptide is Phosphoribosyl-ATP pyrophosphatase (Polaromonas sp. (strain JS666 / ATCC BAA-500)).